Reading from the N-terminus, the 257-residue chain is Probable oxidoreductase yanE (257 aa).

It belongs to the oxidoreductase OpS7 family.

The protein operates within secondary metabolite biosynthesis; terpenoid biosynthesis. Part of the gene cluster that mediates the biosynthesis of yanuthone D, a fungal isoprenoid epoxycyclohexenone that acts as an antibiotic against fungi and bacteria. The first step of the pathway is the synthesis of 6-methylsalicylic acid (6-MSA) by the polyketide synthase yanA. 6-MSA is then converted to m-cresol by the decarboxylase yanB. The cytochrome P450 monooxygenase yanC then catalyzes the oxidation of m-cresol to toluquinol. Epoxidation of toluquinol is then performed by the short chain dehydrogenase yanD, with the help of yanE, and a further prenylation by yanG leads to 7-deacetoxyyanuthone A. The next step is the hydroxylation of C-22 of 7-deacetoxyyanuthone A by the cytochrome P450 monooxygenase yanH to yield 22-deacetylyanuthone A. O-Mevalon transferase yanI then attaches mevalon to the hydroxyl group of 22-deacetylyanuthone A to produce yanuthone E. Finally, the FAD-dependent monooxygenase yanF oxidizes the hydroxyl group at C15 of yanuthone E to form yanuthone D. Furthermore, several branching points in the pathway lead to the production of yanuthones F and G from 7-deacetoxyyanuthone A; yanuthones H and I from 22-deacetylyanuthone A; and yanuthone J from yanuthone E. YanE is also involved in the synthesis of yanuthone X1 which does not have 6-methylsalicylic acid (6-MSA) as precursor. In Aspergillus niger (strain ATCC 1015 / CBS 113.46 / FGSC A1144 / LSHB Ac4 / NCTC 3858a / NRRL 328 / USDA 3528.7), this protein is Probable oxidoreductase yanE.